A 92-amino-acid chain; its full sequence is Small ribosomal subunit protein bS20 (92 aa).

Positions 1-23 (MANTPSAKKRAKQAEKRRSHNAS) are disordered. Positions 7 to 20 (AKKRAKQAEKRRSH) are enriched in basic residues.

This sequence belongs to the bacterial ribosomal protein bS20 family.

Functionally, binds directly to 16S ribosomal RNA. This chain is Small ribosomal subunit protein bS20, found in Pseudomonas fluorescens (strain SBW25).